The following is a 462-amino-acid chain: Glycine--tRNA ligase (462 aa).

The substrate site is built by R100 and E174. ATP contacts are provided by residues 206–208, 216–221, 290–291, and 334–337; these read RNE, FRTREF, EL, and GADR. Substrate is bound at residue 221-225; it reads FEQME. Substrate is bound at residue 330–334; that stretch reads EPSLG.

Belongs to the class-II aminoacyl-tRNA synthetase family. Homodimer.

The protein localises to the cytoplasm. The enzyme catalyses tRNA(Gly) + glycine + ATP = glycyl-tRNA(Gly) + AMP + diphosphate. Its function is as follows. Catalyzes the attachment of glycine to tRNA(Gly). This Acetivibrio thermocellus (strain ATCC 27405 / DSM 1237 / JCM 9322 / NBRC 103400 / NCIMB 10682 / NRRL B-4536 / VPI 7372) (Clostridium thermocellum) protein is Glycine--tRNA ligase.